The primary structure comprises 387 residues: Formate-dependent phosphoribosylglycinamide formyltransferase (387 aa).

Residues Glu-21–Leu-22 and Glu-81 contribute to the N(1)-(5-phospho-beta-D-ribosyl)glycinamide site. Residues Arg-113, Lys-154, Ser-159 to Gln-164, Glu-193 to Val-196, and Glu-201 contribute to the ATP site. Residues Val-118 to Leu-306 form the ATP-grasp domain. Residues Glu-265 and Glu-277 each coordinate Mg(2+). Residues Asp-284, Lys-352, and Arg-359 to Arg-360 each bind N(1)-(5-phospho-beta-D-ribosyl)glycinamide.

This sequence belongs to the PurK/PurT family. Homodimer.

It carries out the reaction N(1)-(5-phospho-beta-D-ribosyl)glycinamide + formate + ATP = N(2)-formyl-N(1)-(5-phospho-beta-D-ribosyl)glycinamide + ADP + phosphate + H(+). The protein operates within purine metabolism; IMP biosynthesis via de novo pathway; N(2)-formyl-N(1)-(5-phospho-D-ribosyl)glycinamide from N(1)-(5-phospho-D-ribosyl)glycinamide (formate route): step 1/1. Functionally, involved in the de novo purine biosynthesis. Catalyzes the transfer of formate to 5-phospho-ribosyl-glycinamide (GAR), producing 5-phospho-ribosyl-N-formylglycinamide (FGAR). Formate is provided by PurU via hydrolysis of 10-formyl-tetrahydrofolate. This Sulfurovum sp. (strain NBC37-1) protein is Formate-dependent phosphoribosylglycinamide formyltransferase.